Reading from the N-terminus, the 1169-residue chain is Pesticidal crystal protein Cry8Ba (1169 aa).

Residues Met1–Arg26 are disordered. Residues Thr15 to Asn25 are compositionally biased toward polar residues.

Belongs to the delta endotoxin family.

Promotes colloidosmotic lysis by binding to the midgut epithelial cells of insects. Active on various scarabaeid beetles. This chain is Pesticidal crystal protein Cry8Ba (cry8Ba), found in Bacillus thuringiensis serovar kumamotoensis.